The following is a 529-amino-acid chain: BTB/POZ domain-containing protein 6 (529 aa).

Residues alanine 127 to alanine 197 enclose the BTB domain.

In terms of assembly, homodimer and heterodimer. Interacts with cul3 via the BTB domain.

Its subcellular location is the cytoplasm. Adapter protein for the cul3 E3 ubiquitin-protein ligase complex. Involved in late neuronal development and muscle formation. In Xenopus tropicalis (Western clawed frog), this protein is BTB/POZ domain-containing protein 6 (btbd6).